A 272-amino-acid polypeptide reads, in one-letter code: Shikimate dehydrogenase (NADP(+)) (272 aa).

Shikimate-binding positions include 14–16 (SKS) and T61. The Proton acceptor role is filled by K65. E77 is an NADP(+) binding site. N86 and D102 together coordinate shikimate. Residues 126–130 (GAGGA), 149–154 (NRTASR), and M213 each bind NADP(+). Residue Y215 coordinates shikimate. Residue G237 coordinates NADP(+).

The protein belongs to the shikimate dehydrogenase family. As to quaternary structure, homodimer.

It carries out the reaction shikimate + NADP(+) = 3-dehydroshikimate + NADPH + H(+). Its pathway is metabolic intermediate biosynthesis; chorismate biosynthesis; chorismate from D-erythrose 4-phosphate and phosphoenolpyruvate: step 4/7. Involved in the biosynthesis of the chorismate, which leads to the biosynthesis of aromatic amino acids. Catalyzes the reversible NADPH linked reduction of 3-dehydroshikimate (DHSA) to yield shikimate (SA). The protein is Shikimate dehydrogenase (NADP(+)) of Salmonella heidelberg (strain SL476).